We begin with the raw amino-acid sequence, 104 residues long: UPF0235 protein Paes_1868 (104 aa).

This sequence belongs to the UPF0235 family.

The chain is UPF0235 protein Paes_1868 from Prosthecochloris aestuarii (strain DSM 271 / SK 413).